The chain runs to 283 residues: uncharacterized protein (283 aa).

A run of 3 helical transmembrane segments spans residues 18-38 (VYDIIVVIVVMALATIIAKLI), 61-81 (VIYFGIIIVAFIAVLPALGLD), and 94-114 (IVLGFASQSVVANLVSGIFLI).

It belongs to the MscS (TC 1.A.23) family.

It is found in the cell membrane. This is an uncharacterized protein from Archaeoglobus fulgidus (strain ATCC 49558 / DSM 4304 / JCM 9628 / NBRC 100126 / VC-16).